The following is a 546-amino-acid chain: MSDFKRRKLEGGKSAIDAARERKALKKASAPLKKSHAKPAPSNKPTAKRPPPPSPPQSQSEEDEDEFGGFSGEEEEDVSRAKMTNGSTAKADAEAEQSDEEAEAQAAAAVEAPKKTFADLGVREELCDACENLGYKTATPIQTESIPLALAGKDIIGLAETGSGKTAAFVLPILQALLDKPQAYFGLIMAPTRELAYQISQQVDALGSIINVKCATLVGGMDMVPQAIALSKRPHIIVASPGRLLDHLENTKGFSLKHLKYLVLDEADRLLDLDFGDSLDKIFKVLPRDDRHTYLFSATMSSKVESLQRAALKNPVRVSISSSSHQVVSTLLQSYMLIPHKYKDLYLIHLLNDNIGHATILFTRTVNETQRLAVLLRTLGFQALPLHGQLSQSNRLGALNKFKAKARDILVATDVAARGLDIPSVDLVVNFDLPHDSETYVHRVGRTARAGKSGKAVSFVTQYDLEIFQRIEHALGKQVPEEKVSRDEVMVYAERVGEAQRVAVREMKDLHDQRKSGRGGRGGGRGGGRGGRGRGGRRDNMDMDEG.

The segment at 1–108 (MSDFKRRKLE…DEEAEAQAAA (108 aa)) is disordered. 2 stretches are compositionally biased toward acidic residues: residues 60 to 77 (SEED…EEED) and 94 to 103 (EAEQSDEEAE). A Q motif motif is present at residues 115–143 (KTFADLGVREELCDACENLGYKTATPIQT). In terms of domain architecture, Helicase ATP-binding spans 146 to 318 (IPLALAGKDI…RAALKNPVRV (173 aa)). 159–166 (AETGSGKT) contacts ATP. The DEAD box signature appears at 265-268 (DEAD). Residues 342–490 (YKDLYLIHLL…EEKVSRDEVM (149 aa)) enclose the Helicase C-terminal domain. Basic and acidic residues predominate over residues 504 to 515 (VREMKDLHDQRK). Positions 504-546 (VREMKDLHDQRKSGRGGRGGGRGGGRGGRGRGGRRDNMDMDEG) are disordered. Over residues 519–530 (GGRGGGRGGGRG) the composition is skewed to gly residues. The span at 536–546 (GRRDNMDMDEG) shows a compositional bias: basic and acidic residues.

This sequence belongs to the DEAD box helicase family. DDX47/RRP3 subfamily. In terms of assembly, interacts with the SSU processome.

The protein localises to the nucleus. It carries out the reaction ATP + H2O = ADP + phosphate + H(+). In terms of biological role, ATP-dependent rRNA helicase required for pre-ribosomal RNA processing. Involved in the maturation of the 35S-pre-rRNA and to its cleavage to mature 18S rRNA. This chain is ATP-dependent rRNA helicase RRP3, found in Phaeosphaeria nodorum (strain SN15 / ATCC MYA-4574 / FGSC 10173) (Glume blotch fungus).